The sequence spans 411 residues: 2-acylphloroglucinol 4-prenyltransferase, chloroplastic (411 aa).

The N-terminal 91 residues, 1–91 (MELSSVSSFS…CNDQRGNSIR (91 aa)), are a transit peptide targeting the chloroplast. 8 consecutive transmembrane segments (helical) span residues 159-179 (LLGM…NQIF), 198-218 (ISVE…FILI), 226-246 (LLTS…VPPF), 253-273 (ITAF…VYYA), 278-298 (LGLA…ITFM), 333-353 (LLGT…AIIW), 356-376 (AFKS…LIFQ), and 391-411 (KSFY…YLFI).

Belongs to the UbiA prenyltransferase family. Requires Mg(2+) as cofactor. Expressed in glandular trichomes called lupulin glands, and in early stage and mature cones. Detected in leaves, but not in root, stem and first stage of flowers. No expression in male flowers.

It is found in the plastid. It localises to the chloroplast membrane. It carries out the reaction a 2-acylphloroglucinol + dimethylallyl diphosphate = a 2-acyl-4-prenylphloroglucinol + diphosphate. It functions in the pathway secondary metabolite biosynthesis. Involved in the biosynthesis of prenylated phenolics natural products which contribute to the bitter taste of beer and display broad biological activities. Catalyzes the first prenylation step in the beta-bitter acid pathway. Abble to transfer dimethylallyl diphosphate (DMAPP) or geranyl diphosphate (GPP) to phlorisovalerophenone (PIVP), phlorisobutrylphenone (PIMP) and naringenin chalcone. Can also use phlorisobutyrophenone (PIBP) and phlormethylbutanophenone (PMBP) as substrates, but not 6'-O-methylated chalcone or naringenin. This chain is 2-acylphloroglucinol 4-prenyltransferase, chloroplastic, found in Humulus lupulus (European hop).